We begin with the raw amino-acid sequence, 467 residues long: Repressible acid phosphatase (467 aa).

The first 17 residues, 1 to 17 (MFKSVVYSILAASLANA), serve as a signal peptide directing secretion. Catalysis depends on H75, which acts as the Nucleophile. Residues N97, N103, N162, N192, N250, and N315 are each glycosylated (N-linked (GlcNAc...) asparagine). D338 acts as the Proton donor in catalysis. 6 N-linked (GlcNAc...) asparagine glycosylation sites follow: N356, N390, N439, N445, N456, and N461.

This sequence belongs to the histidine acid phosphatase family. Post-translationally, glycosylated during secretion across the membrane.

The protein resides in the secreted. It catalyses the reaction a phosphate monoester + H2O = an alcohol + phosphate. In terms of biological role, partially mediates extracellular nucleotide derived phosphate hydrolysis along with NPP1 and NPP2. The sequence is that of Repressible acid phosphatase (PHO5) from Saccharomyces cerevisiae (strain ATCC 204508 / S288c) (Baker's yeast).